We begin with the raw amino-acid sequence, 506 residues long: Alpha-L-fucosidase 1 (506 aa).

The signal sequence occupies residues 1–23 (MNSQITLFFFFFSILSLSQISNS). N-linked (GlcNAc...) asparagine glycans are attached at residues Asn-22, Asn-82, Asn-248, Asn-320, Asn-355, and Asn-487.

This sequence belongs to the glycosyl hydrolase 29 family.

It is found in the secreted. It localises to the extracellular space. The protein localises to the apoplast. The catalysed reaction is an alpha-L-fucoside + H2O = L-fucose + an alcohol. Functionally, hydrolyzes both 3- and 4-linked fucoses in Lewis determinants. Not active on neither 2-linked fucose nor on fucose in alpha-1,3-linkage to the innermost GlcNAc. In Arabidopsis thaliana (Mouse-ear cress), this protein is Alpha-L-fucosidase 1 (FUC1).